Consider the following 413-residue polypeptide: Multifunctional CCA protein (413 aa).

Gly8 and Arg11 together coordinate ATP. Residues Gly8 and Arg11 each coordinate CTP. The Mg(2+) site is built by Asp21 and Asp23. Residues Arg91, Arg143, and Arg146 each contribute to the ATP site. Positions 91, 143, and 146 each coordinate CTP. The 102-residue stretch at 232-333 (TGVHVMMVID…VRLLERADAL (102 aa)) folds into the HD domain.

It belongs to the tRNA nucleotidyltransferase/poly(A) polymerase family. Bacterial CCA-adding enzyme type 1 subfamily. In terms of assembly, monomer. Can also form homodimers and oligomers. The cofactor is Mg(2+). Ni(2+) serves as cofactor.

The enzyme catalyses a tRNA precursor + 2 CTP + ATP = a tRNA with a 3' CCA end + 3 diphosphate. The catalysed reaction is a tRNA with a 3' CCA end + 2 CTP + ATP = a tRNA with a 3' CCACCA end + 3 diphosphate. Catalyzes the addition and repair of the essential 3'-terminal CCA sequence in tRNAs without using a nucleic acid template. Adds these three nucleotides in the order of C, C, and A to the tRNA nucleotide-73, using CTP and ATP as substrates and producing inorganic pyrophosphate. tRNA 3'-terminal CCA addition is required both for tRNA processing and repair. Also involved in tRNA surveillance by mediating tandem CCA addition to generate a CCACCA at the 3' terminus of unstable tRNAs. While stable tRNAs receive only 3'-terminal CCA, unstable tRNAs are marked with CCACCA and rapidly degraded. The sequence is that of Multifunctional CCA protein from Burkholderia mallei (strain NCTC 10247).